A 209-amino-acid polypeptide reads, in one-letter code: Somatotropin (209 aa).

The signal sequence occupies residues 1–22 (MGQVFLLMPVLLVAGYLSLGAA). Histidine 38 serves as a coordination point for Zn(2+). Residues cysteine 71 and cysteine 182 are joined by a disulfide bond. Glutamate 191 provides a ligand contact to Zn(2+). Cysteines 199 and 207 form a disulfide.

The protein belongs to the somatotropin/prolactin family.

The protein localises to the secreted. In terms of biological role, growth hormone plays an important role in growth control and is involved in the regulation of several anabolic processes. Implicated as an osmoregulatory substance important for seawater adaptation. The protein is Somatotropin (gh) of Esox lucius (Northern pike).